The primary structure comprises 164 residues: Endoribonuclease YbeY (164 aa).

Residues His-117, His-121, and His-127 each contribute to the Zn(2+) site.

The protein belongs to the endoribonuclease YbeY family. Zn(2+) serves as cofactor.

It is found in the cytoplasm. Its function is as follows. Single strand-specific metallo-endoribonuclease involved in late-stage 70S ribosome quality control and in maturation of the 3' terminus of the 16S rRNA. This is Endoribonuclease YbeY from Mycoplasma capricolum subsp. capricolum (strain California kid / ATCC 27343 / NCTC 10154).